The primary structure comprises 242 residues: MDAIKKKMSAMKTKLEEADKQAQDAEDELTATLEKAAETEQTADELQKTLADLEDELDAAESRLTSLTEKYNEEEKKAEEGRRAHKELENRGQTDYSRLNRLETELAEITEQNEVVVEKLSELSSQLEENERILDEEEERCATADAQVKELEVDVVQVGNQLRSMEINEEKASKSNDQSANKLEDTIEKYNTIKDRADDAEARSRDLEAELNECDDELAAAKEAYGQSKADMDELLLELASM.

Disordered regions lie at residues methionine 1–alanine 31 and threonine 65–tyrosine 96. Residues methionine 1–methionine 242 adopt a coiled-coil conformation. Composition is skewed to basic and acidic residues over residues threonine 13–glutamine 23 and lysine 70–tyrosine 96.

The protein belongs to the tropomyosin family. As to quaternary structure, homodimer. As to expression, expressed ubiquitously.

The protein is Tropomyosin-1 (TPM1) of Podocoryna carnea (Hydrozoan).